A 206-amino-acid polypeptide reads, in one-letter code: Ribosomal RNA small subunit methyltransferase G (206 aa).

Residues Gly73, Leu78, 124-125, and Arg139 contribute to the S-adenosyl-L-methionine site; that span reads VE.

Belongs to the methyltransferase superfamily. RNA methyltransferase RsmG family.

It is found in the cytoplasm. It carries out the reaction guanosine(527) in 16S rRNA + S-adenosyl-L-methionine = N(7)-methylguanosine(527) in 16S rRNA + S-adenosyl-L-homocysteine. In terms of biological role, specifically methylates the N7 position of guanine in position 527 of 16S rRNA. This is Ribosomal RNA small subunit methyltransferase G from Pectobacterium carotovorum subsp. carotovorum (strain PC1).